Consider the following 927-residue polypeptide: Ribosome-releasing factor 2, mitochondrial (927 aa).

Residues 1-57 (MVTAPLLGWVAVRPIPRLSKLNTCKYVSSSLQSYKRSVGSCLGKQQSRDFSYSATLT) constitute a mitochondrion transit peptide. Positions 64–379 (EKTRNIGIIA…AVNNLLPGPS (316 aa)) constitute a tr-type G domain. GTP is bound by residues 73–80 (AHIDAGKT), 163–167 (DTPGH), and 217–220 (NKLD).

It belongs to the TRAFAC class translation factor GTPase superfamily. Classic translation factor GTPase family. EF-G/EF-2 subfamily.

It is found in the mitochondrion. Mitochondrial GTPase that mediates the disassembly of ribosomes from messenger RNA at the termination of mitochondrial protein biosynthesis. Not involved in the GTP-dependent ribosomal translocation step during translation elongation. The chain is Ribosome-releasing factor 2, mitochondrial (mef2) from Talaromyces marneffei (strain ATCC 18224 / CBS 334.59 / QM 7333) (Penicillium marneffei).